We begin with the raw amino-acid sequence, 1818 residues long: MSYSELYTRYTRVWIPDPDEVWRSAELTKDYKEGDKSLQLRLEDDTILEYPVDVQNNQVPFLRNPDILVGENDLTALSHLHEPAVLHNLKVRFLESNHIYTYCGIVLVAINPYEQLPIYGQDVIYAYSGQNMGDMDPHIFAVAEEAYKQMARDEKNQSIIVSGESGAGKTVSAKYAMRYFATVGGSASDTNIEEKVLASSPIMEAIGNAKTTRNDNSSRFGKFIEIGFDKKYHIIGANMRTYLLEKSRVVFQADDERNYHIFYQLCAAASLPEFKELALTCAEDFFYTAHGGNTTIEGVNDADDFEKTRQALTLLGVRDSHQISIFKIIASILHLGSVEIQSERDGDSCSISPQDEHLSNFCSLLGIEHSQMEHWLCHRKLVTTSETYVKTMSLQQVVNARDALAKHIYAQLFSWIVEHINKALHTSHKQHSFIGVLDIYGFETFEINSFEQFCINYANEKLQQQFNSHVFKLEQEEYMKEQIPWTLIDFYDNQPCIDLIEAKLGILDLLDEECKVPKGTDQNWAQKLYERHSNSQHFQKPRMSNTAFIVNHFADKVEYLSDGFLEKNRDTVYEEQINILKASKFPLVADLFHDDKDSAPATNTAKNRSSSKINVRSSRPLIKVPNKEHKKSVGYQFRTSLNLLMETLNATTPHYVRCIKPNDEKLPFHFDPKRAVQQLRACGVLETIRISAAGYPSRWTYHDFFNRYRVLMKKRELTNTDKKNICKSVLESLIKDPDKFQFGRTKIFFRAGQVAYLEKLRADKFREATIMIQKSVRGWLQRVKYRRLRAATLSLQRFCRGYLARRLAEHLRRTRAAIVFQKQYRMLKARRAYRRVCRATVIIQSFTRAMFVRRNYRQVLMEHKATIIQKYARGWMARKRFLRERDAAIVIQCAFRRLKARQELKALKIEARSAEHLKRLNVGMENKVVQLQRKIDDQNKEFKTLSEQLSAVTSSHAVEVEKLKKELAHYQQNQEADTSLQLQEEVQSLRTELQKAHSERRVLEDAHNKENGELRKRVADLEHENALLKDEKEYLNNQILCQSKAESSQSSVEENLLMKKELEEERSRYQNLVKEYSQLEQRYENLRDEQTPGHRKNPSNQSSLESDSNYPSISTSEIGDTEDALQQVEEIGIEKAAMDMTVFLKLQKRVRELEQERKKLQAQLEKGQQDSKKGQVEQQNNGLDVDQDADIAYNSLKRQELESENKKLKNDLNELRKAVADQAMQDNSTHSSPDSYSLLLNQLKLANEELEVRKEEVLILRTQIMNADQRRLSGKNMEPNINARTSWPNSEKHVDQEDAIEAYHGVCQTNRLLEAQLQAQSLEHEEEVEHLKAQVEALKEEMDKQQQTFCQTLLLSPEAQVEFGVQQEISRLTNENLDFKELVEKLEKNERKLKKQLKIYMKKVQDLEAAQALAQSDRRHHELTRQVTVQRKEKDFQGMLEYHKEDEALLIRNLVTDLKPQMLSGTVPCLPAYILYMCIRHADYTNDDLKVHSLLSSTINGIKKVLKKHNDDFEMTSFWLSNTCRFLHCLKQYSGDEGFMTQNTAKQNEHCLKNFDLTEYRQVLSDLSIQIYQQLIKIAEGLLQPMIVSAMLENESIQGLSGVRPTGYRKRSSSMVDGENSYCLEAIVRQMNSFHTVLCDQGLDPEIILQVFKQLFYMINAVTLNNLLLRKDACSWSTGMQLRYNISQLEEWLRGKNLHQSGAVQTMEPLIQAAQLLQLKKKTHEDAEAICSLCTSLSTQQIVKILNLYTPLNEFEERVTVSFIRTIQAQLQERNDPQQLLLDSKHVFPVLFPYNPSALTMDSIHIPACLNLEFLNEV.

The region spanning 8-60 is the Myosin N-terminal SH3-like domain; sequence TRYTRVWIPDPDEVWRSAELTKDYKEGDKSLQLRLEDDTILEYPVDVQNNQVP. Residues 21 to 40 form a requires for interaction with LIMA1 region; the sequence is VWRSAELTKDYKEGDKSLQL. The Myosin motor domain occupies 69–762; it reads VGENDLTALS…QVAYLEKLRA (694 aa). An ATP-binding site is contributed by 163-170; sequence GESGAGKT. The tract at residues 641–663 is actin-binding; sequence LNLLMETLNATTPHYVRCIKPND. IQ domains lie at 765–794, 788–817, 813–842, 836–865, 861–890, and 884–913; these read FREA…ATLS, LRAA…TRAA, RTRA…ATVI, VCRA…EHKA, MEHK…AAIV, and ERDA…EARS. Disordered regions lie at residues 1086-1120 and 1161-1188; these read LRDE…EIGD and QAQL…VDQD. Positions 1098 to 1118 are enriched in polar residues; that stretch reads PSNQSSLESDSNYPSISTSEI. Coiled coils occupy residues 1140–1261 and 1313–1415; these read MTVF…LILR and LEAQ…ALAQ. At Ser-1416 the chain carries Phosphoserine. Positions 1496–1773 constitute a Dilute domain; it reads SSTINGIKKV…IRTIQAQLQE (278 aa).

The protein belongs to the TRAFAC class myosin-kinesin ATPase superfamily. Myosin family. Component of the CART complex, at least composed of ACTN4, HGS/HRS, MYO5B and TRIM3. Interacts with RAB11FIP2. Interacts with RAB11A and RAB8A. Found in a complex with CFTR and RAB11A. Interacts with NPC1L1. Interacts with LIMA1.

Its subcellular location is the cytoplasm. In terms of biological role, may be involved in vesicular trafficking via its association with the CART complex. The CART complex is necessary for efficient transferrin receptor recycling but not for EGFR degradation. Required in a complex with RAB11A and RAB11FIP2 for the transport of NPC1L1 to the plasma membrane. Together with RAB11A participates in CFTR trafficking to the plasma membrane and TF (transferrin) recycling in nonpolarized cells. Together with RAB11A and RAB8A participates in epithelial cell polarization. Together with RAB25 regulates transcytosis. Required for proper localization of bile salt export pump ABCB11 at the apical/canalicular plasma membrane of hepatocytes. The polypeptide is Unconventional myosin-Vb (Myo5b) (Mus musculus (Mouse)).